A 393-amino-acid polypeptide reads, in one-letter code: CCA-adding enzyme (393 aa).

2 residues coordinate ATP: Gly-27 and Arg-30. 2 residues coordinate CTP: Gly-27 and Arg-30. Mg(2+)-binding residues include Asp-40 and Asp-42. Residues Arg-111, Asp-154, Arg-157, Arg-160, and Arg-163 each contribute to the ATP site. CTP-binding residues include Arg-111, Asp-154, Arg-157, Arg-160, and Arg-163.

Belongs to the tRNA nucleotidyltransferase/poly(A) polymerase family. Bacterial CCA-adding enzyme type 3 subfamily. As to quaternary structure, homodimer. Mg(2+) is required as a cofactor.

It carries out the reaction a tRNA precursor + 2 CTP + ATP = a tRNA with a 3' CCA end + 3 diphosphate. The catalysed reaction is a tRNA with a 3' CCA end + 2 CTP + ATP = a tRNA with a 3' CCACCA end + 3 diphosphate. Functionally, catalyzes the addition and repair of the essential 3'-terminal CCA sequence in tRNAs without using a nucleic acid template. Adds these three nucleotides in the order of C, C, and A to the tRNA nucleotide-73, using CTP and ATP as substrates and producing inorganic pyrophosphate. tRNA 3'-terminal CCA addition is required both for tRNA processing and repair. Also involved in tRNA surveillance by mediating tandem CCA addition to generate a CCACCA at the 3' terminus of unstable tRNAs. While stable tRNAs receive only 3'-terminal CCA, unstable tRNAs are marked with CCACCA and rapidly degraded. This Listeria innocua serovar 6a (strain ATCC BAA-680 / CLIP 11262) protein is CCA-adding enzyme.